The chain runs to 324 residues: Beta-ketoacyl-[acyl-carrier-protein] synthase III (324 aa).

Residues Cys114 and His246 contribute to the active site. Positions 247 to 251 (QANLR) are ACP-binding. The active site involves Asn276.

It belongs to the thiolase-like superfamily. FabH family. Homodimer.

Its subcellular location is the cytoplasm. It catalyses the reaction malonyl-[ACP] + acetyl-CoA + H(+) = 3-oxobutanoyl-[ACP] + CO2 + CoA. Its pathway is lipid metabolism; fatty acid biosynthesis. Its function is as follows. Catalyzes the condensation reaction of fatty acid synthesis by the addition to an acyl acceptor of two carbons from malonyl-ACP. Catalyzes the first condensation reaction which initiates fatty acid synthesis and may therefore play a role in governing the total rate of fatty acid production. Possesses both acetoacetyl-ACP synthase and acetyl transacylase activities. Its substrate specificity determines the biosynthesis of branched-chain and/or straight-chain of fatty acids. The protein is Beta-ketoacyl-[acyl-carrier-protein] synthase III of Campylobacter jejuni subsp. jejuni serotype O:2 (strain ATCC 700819 / NCTC 11168).